Here is a 382-residue protein sequence, read N- to C-terminus: MSEYSIFTSESVSEGHPDKMADQISDAILDAIIKDDPHARVAVETMVKTGMAVVAGEVRTNTYVELEDIVRQVILDIGYDSSEKGFDGASCAVLNGIGKQSADIAIGVDEAEEKEMGAGDQGLMFGFATDETDTLMPAPVYYSHRLVERQAKLRKNSTLPWLRPDAKSQVTLRYDNGKPVAVDAVVLSTQHSPDIKLADLREAVMEEIIKPVLPEEWLHKDTLYHVNPTGIFVIGGPMGDCGLTGRKIIVDTYGGMARHGGGAFSGKDPSKVDRSAAYAGRYVAKNIVAAGLASKCEIQVSYAIGVAEPTSISVNTFGTGKISDSAIVDLVREHFDLRPRGIIEMLDLRKPIYRPTASYGHFGREGFSWEKTDKTEALKAAL.

Residue histidine 16 participates in ATP binding. Aspartate 18 is a binding site for Mg(2+). Glutamate 44 contributes to the K(+) binding site. The L-methionine site is built by glutamate 57 and glutamine 100. Residues 100–110 (QSADIAIGVDE) form a flexible loop region. ATP contacts are provided by residues 165 to 167 (DAK), aspartate 240, 246 to 247 (RK), alanine 263, and lysine 267. Aspartate 240 serves as a coordination point for L-methionine. Lysine 271 provides a ligand contact to L-methionine.

This sequence belongs to the AdoMet synthase family. In terms of assembly, homotetramer; dimer of dimers. It depends on Mg(2+) as a cofactor. K(+) serves as cofactor.

The protein resides in the cytoplasm. It catalyses the reaction L-methionine + ATP + H2O = S-adenosyl-L-methionine + phosphate + diphosphate. It functions in the pathway amino-acid biosynthesis; S-adenosyl-L-methionine biosynthesis; S-adenosyl-L-methionine from L-methionine: step 1/1. Catalyzes the formation of S-adenosylmethionine (AdoMet) from methionine and ATP. The overall synthetic reaction is composed of two sequential steps, AdoMet formation and the subsequent tripolyphosphate hydrolysis which occurs prior to release of AdoMet from the enzyme. The sequence is that of S-adenosylmethionine synthase from Alcanivorax borkumensis (strain ATCC 700651 / DSM 11573 / NCIMB 13689 / SK2).